The following is a 496-amino-acid chain: Maturase K (496 aa).

The protein belongs to the intron maturase 2 family. MatK subfamily.

It is found in the plastid. The protein resides in the chloroplast. In terms of biological role, usually encoded in the trnK tRNA gene intron. Probably assists in splicing its own and other chloroplast group II introns. The chain is Maturase K from Paeonia suffruticosa (Tree peony).